We begin with the raw amino-acid sequence, 189 residues long: GTPase KRas (189 aa).

Position 1 is an N-acetylmethionine (M1). The residue at position 2 (T2) is an N-acetylthreonine; in GTPase KRas, N-terminally processed. Residues 10–18, 29–35, and 59–60 contribute to the GTP site; these read GAGGVGKSA, VDEYDPT, and AG. Positions 32-40 match the Effector region motif; the sequence is YDPTIEDSY. N6-acetyllysine is present on K104. 116 to 119 serves as a coordination point for GTP; sequence NKCD. The segment at 166 to 185 is hypervariable region; that stretch reads YRLKKISKEEKTPGCVKIKK. K170 participates in a covalent cross-link: Glycyl lysine isopeptide (Lys-Gly) (interchain with G-Cter in ubiquitin). C180 is lipidated: S-palmitoyl cysteine. Residues K182, K184, and K185 are each lipidated (N6-palmitoyl lysine). Residue C186 is modified to Cysteine methyl ester. A lipid anchor (S-farnesyl cysteine) is attached at C186. The propeptide at 187-189 is removed in mature form; that stretch reads VIM.

It belongs to the small GTPase superfamily. Ras family. In terms of assembly, interacts with PHLPP. Interacts (active GTP-bound form preferentially) with RGS14. Interacts (when farnesylated) with PDE6D; this promotes dissociation from the cell membrane. Interacts with SOS1. Interacts (when farnesylated) with GPR31. Interacts with RAP1GDS1. Interacts (active GTP-bound form) with both SHOC2 and PP1c (all isoforms) to form a tertiary complex; SHOC2 and PP1c preferably bind M-Ras/MRAS, but they also bind K-Ras/KRAS, N-Ras/NRAS and H-Ras/HRAS. Interacts (GTP-bound form) with MAPKAP1/SIN1; inhibiting K-Ras/KRAS activity. Interacts (when farnesylated) with GPR31. Post-translationally, acetylation at Lys-104 prevents interaction with guanine nucleotide exchange factors (GEFs). Ubiquitinated by the BCR(LZTR1) E3 ubiquitin ligase complex at Lys-170 in a non-degradative manner, leading to inhibit Ras signaling by decreasing Ras association with membranes. In terms of processing, palmitoylated at Lys-182, Lys-184 and Lys-185. Lysine-depalmitoylation by SIRT2 promotes its localization to endomembranes in endocytic pathways.

It localises to the cell membrane. The protein resides in the endomembrane system. Its subcellular location is the cytoplasm. The protein localises to the cytosol. The enzyme catalyses GTP + H2O = GDP + phosphate + H(+). Alternates between an inactive form bound to GDP and an active form bound to GTP. Activated by a guanine nucleotide-exchange factor (GEF) and inactivated by a GTPase-activating protein (GAP). Interaction with SOS1 promotes exchange of bound GDP to GTP. Functionally, ras proteins bind GDP/GTP and possess intrinsic GTPase activity. Plays an important role in the regulation of cell proliferation. Plays a role in promoting oncogenic events by inducing transcriptional silencing of tumor suppressor genes (TSGs) in colorectal cancer (CRC) cells in a ZNF304-dependent manner. The sequence is that of GTPase KRas (Kras) from Rattus norvegicus (Rat).